Reading from the N-terminus, the 593-residue chain is SPI-1 type 3 secretion system translocon protein SctE (593 aa).

2 coiled-coil regions span residues 151 to 208 and 287 to 314; these read DTAK…ATDA and EGRQ…NRIM. 2 consecutive transmembrane segments (helical) span residues 330–350 and 409–429; these read VVAA…GLAV and IVGA…VAVV.

This sequence belongs to the SctE/SipB/YopB family. The core secretion machinery of the T3SS is composed of approximately 20 different proteins, including cytoplasmic components, a base, an export apparatus and a needle. This subunit is involved in the formation of a pore, called the translocon, in host membrane.

Its subcellular location is the secreted. The protein resides in the host membrane. The protein localises to the host cell. Its function is as follows. Component of the type III secretion system 1 (SPI-1 T3SS), also called injectisome, which is used to inject bacterial effector proteins into eukaryotic host cells. SipB/SctE1 and SipC/SctB are inserted into the host membrane where they form a pore and allow the translocation of effector proteins into the cytosol of target cells. Functionally, induces macrophage apoptosis either by binding and activating the proapoptotic enzyme caspase-1 (caspase-1 dependent), resulting in the release of interleukin-1 beta active form, or by disrupting mitochondria and inducing autophagy (caspase-1 independent). The former is dependent of its membrane-fusion activity. The sequence is that of SPI-1 type 3 secretion system translocon protein SctE from Salmonella typhi.